Consider the following 275-residue polypeptide: 3-methyl-2-oxobutanoate hydroxymethyltransferase (275 aa).

Asp-44 and Asp-83 together coordinate Mg(2+). 3-methyl-2-oxobutanoate is bound by residues 44–45 (DS), Asp-83, and Lys-113. Residue Glu-115 coordinates Mg(2+). The active-site Proton acceptor is Glu-182.

This sequence belongs to the PanB family. As to quaternary structure, homodecamer; pentamer of dimers. Requires Mg(2+) as cofactor.

The protein resides in the cytoplasm. It catalyses the reaction 3-methyl-2-oxobutanoate + (6R)-5,10-methylene-5,6,7,8-tetrahydrofolate + H2O = 2-dehydropantoate + (6S)-5,6,7,8-tetrahydrofolate. It functions in the pathway cofactor biosynthesis; (R)-pantothenate biosynthesis; (R)-pantoate from 3-methyl-2-oxobutanoate: step 1/2. Catalyzes the reversible reaction in which hydroxymethyl group from 5,10-methylenetetrahydrofolate is transferred onto alpha-ketoisovalerate to form ketopantoate. In Clostridium botulinum (strain Loch Maree / Type A3), this protein is 3-methyl-2-oxobutanoate hydroxymethyltransferase.